The sequence spans 7192 residues: Nonribosomal peptide synthetase gloA (7192 aa).

The segment covering 1-48 has biased composition (polar residues); the sequence is MTPSRSLENGEKQMNWNESPQTASPKNVLRDSNSNGNYVNGHGTNING. The segment at 1 to 52 is disordered; sequence MTPSRSLENGEKQMNWNESPQTASPKNVLRDSNSNGNYVNGHGTNINGDGSD. The region spanning 105 to 181 is the Carrier 1 domain; that stretch reads HSTSKFKEEF…GLFATANFRP (77 aa). Ser-142 carries the post-translational modification O-(pantetheine 4'-phosphoryl)serine. A condensation 1 region spans residues 239–634; that stretch reads EDVYPCTPLQ…TYTVQCLCNP (396 aa). The adenylation 1 stretch occupies residues 675–1047; the sequence is QDQVNIQPAK…SLMYLGRCDS (373 aa). The Carrier 2 domain occupies 1190–1266; the sequence is APSTDAEKQV…DLAFVIQRRL (77 aa). Residue Ser-1227 is modified to O-(pantetheine 4'-phosphoryl)serine. Residues 1316 to 1736 are condensation 2; sequence EDIYPCTPLQ…MSWLSDYDEE (421 aa). Positions 1758-2154 are adenylation 2; the sequence is QEQTKLRPNA…GRRDTQIKIR (397 aa). One can recognise a Carrier 3 domain in the interval 2288–2364; it reads APSTREECLV…ELAELLAKRS (77 aa). At Ser-2325 the chain carries O-(pantetheine 4'-phosphoryl)serine. Residues 2407–2829 are condensation 3; the sequence is VEDVYPCTPL…LIAPEDQEQI (423 aa). The tract at residues 2849 to 3245 is adenylation 3; the sequence is YKQVMARPQA…GRRDDQIKIR (397 aa). The region spanning 3378–3455 is the Carrier 4 domain; that stretch reads TPSTKMEKVI…DLASVMTEHR (78 aa). An O-(pantetheine 4'-phosphoryl)serine modification is found at Ser-3415. The tract at residues 3502–3891 is condensation 4; sequence EDIYPCTALQ…NGVLDQFVYI (390 aa). The segment at 3920–4320 is adenylation 4; the sequence is QEQALARPTA…ARRDMQVKIR (401 aa). Positions 4453–4529 constitute a Carrier 5 domain; it reads LPSTQVELQL…ELAVILDGRK (77 aa). O-(pantetheine 4'-phosphoryl)serine is present on Ser-4490. Residues 4574–4971 form a condensation 5 region; that stretch reads EDIYPCTPLQ…QFEYVVQKFH (398 aa). The tract at residues 5013–5414 is adenylation 5; the sequence is DDHVAARPMA…GRQDLQVKIR (402 aa). Residues 5551-5627 form the Carrier 6 domain; it reads APDTDLGRLI…DLVNTLSNRS (77 aa). Ser-5588 bears the O-(pantetheine 4'-phosphoryl)serine mark. Positions 5674–6071 are condensation 6; it reads EDVYPSTPLQ…CVVQRILTQS (398 aa). Residues 6111–6507 are adenylation 6; sequence QAQVKKSPAA…GRRDLQVKIR (397 aa). Positions 6645–6721 constitute a Carrier 7 domain; sequence NPSTTMERQL…DLAVVLTDRL (77 aa). The residue at position 6682 (Ser-6682) is an O-(pantetheine 4'-phosphoryl)serine. The interval 6795 to 7178 is condensation 7; sequence NGPCDTRALK…NPLSPVKQVL (384 aa).

This sequence belongs to the NRP synthetase family.

It participates in mycotoxin biosynthesis. In terms of biological role, nonribosomal peptide synthetase; part of the gene cluster that mediates the biosynthesis of pneumocandins, lipohexapeptides of the echinocandin family that prevent fungal cell wall formation by non-competitive inhibition of beta-1,3-glucan synthase. The 10,12-dimethylmyristoyl side chain is synthesized by the reducing polyketide synthase gloL/GLPKS4. The thioesterase gloN/GLHYD exclusively interacts with gloL/GLPKS4 to maintain turnover of the polyketide side chain. The 10R,12S-dimethylmyristic acid is then transferred to the first thiolation domain of the nonribosomal peptide synthetase gloA/GLNRPS4 by the acyl-AMP ligase gloD/GLligase, followed by its acylation to L-ornithine to trigger elongation of the cyclic hexapeptide. L-ornithine, 4R-hydroxyl-L-proline (generated from L-proline by the dioxygenase gloF/GLOXY2), 3S-hydroxyl-L-homotyrosine (generated by gloG/GLHtyB, gloH/GLHtyA, gloI/GLHtyC, gloJ/GLHtyD and hydroxylated at C-3 by the dioxygenase gloM/GLOXY1), 3R-hydroxyl-L-glutamine (generated from L-glutamine probably by the dioxygenase gloE/GLOXY3) and 3S-hydroxyl-L-proline (generated from L-proline by the dioxygenase gloF/GLOXY2 to yield pneumocandin B0), or 3S-hydroxyl-4S-methyl-L-proline (generated from L-leucine by the dioxygenase gloC/GLOXY4 to yield pneumocandin A0) are sequentially added to the growing chain. The last C domain of gloA/GLNRPS4 is proposed to be responsible for cyclization by condensation to form the peptide bond between L-ornithine and 3S-hydroxyl-4S-methyl-L-proline (for pneumocandin A0) or 3S-hydroxyl-L-proline (for pneumocandin B0). Finally, the subsequent C-4 hydroxylation of 3S-hydroxyl-L-homotyrosine and L-ornithine dihydroxylation at C-4 and C-5 are performed by the cytochrome P450 monooxygenases gloP/GLP450-1 and gloO/GLP450-2, respectively. This is Nonribosomal peptide synthetase gloA from Glarea lozoyensis (strain ATCC 20868 / MF5171).